The chain runs to 284 residues: 2,3,4,5-tetrahydropyridine-2,6-dicarboxylate N-succinyltransferase (284 aa).

Substrate is bound by residues Arg111 and Asp148.

Belongs to the transferase hexapeptide repeat family. In terms of assembly, homotrimer.

The protein localises to the cytoplasm. It carries out the reaction (S)-2,3,4,5-tetrahydrodipicolinate + succinyl-CoA + H2O = (S)-2-succinylamino-6-oxoheptanedioate + CoA. The protein operates within amino-acid biosynthesis; L-lysine biosynthesis via DAP pathway; LL-2,6-diaminopimelate from (S)-tetrahydrodipicolinate (succinylase route): step 1/3. In Chelativorans sp. (strain BNC1), this protein is 2,3,4,5-tetrahydropyridine-2,6-dicarboxylate N-succinyltransferase.